The sequence spans 264 residues: 4-hydroxy-tetrahydrodipicolinate reductase (264 aa).

NAD(+) is bound at residue 8–13 (GPRGKM). Position 36 (K36) interacts with NADP(+). NAD(+) contacts are provided by residues 97-99 (GTT) and 123-126 (APNF). H153 (proton donor/acceptor) is an active-site residue. H154 is a (S)-2,3,4,5-tetrahydrodipicolinate binding site. K157 (proton donor) is an active-site residue. Residue 163 to 164 (GT) participates in (S)-2,3,4,5-tetrahydrodipicolinate binding.

The protein belongs to the DapB family.

Its subcellular location is the cytoplasm. It carries out the reaction (S)-2,3,4,5-tetrahydrodipicolinate + NAD(+) + H2O = (2S,4S)-4-hydroxy-2,3,4,5-tetrahydrodipicolinate + NADH + H(+). The catalysed reaction is (S)-2,3,4,5-tetrahydrodipicolinate + NADP(+) + H2O = (2S,4S)-4-hydroxy-2,3,4,5-tetrahydrodipicolinate + NADPH + H(+). It participates in amino-acid biosynthesis; L-lysine biosynthesis via DAP pathway; (S)-tetrahydrodipicolinate from L-aspartate: step 4/4. Its function is as follows. Catalyzes the conversion of 4-hydroxy-tetrahydrodipicolinate (HTPA) to tetrahydrodipicolinate. The chain is 4-hydroxy-tetrahydrodipicolinate reductase from Halalkalibacterium halodurans (strain ATCC BAA-125 / DSM 18197 / FERM 7344 / JCM 9153 / C-125) (Bacillus halodurans).